A 263-amino-acid polypeptide reads, in one-letter code: Antigen 10-3 (263 aa).

An N-terminal signal peptide occupies residues 1–21; the sequence is MNIYLIGILCIVGLIISQGST. The disordered stretch occupies residues 70 to 207; it reads GNKKDKQPTQ…QINDGTSDKP (138 aa). Over residues 78–90 the composition is skewed to low complexity; that stretch reads TQKTTPKPTTPKQ. Repeat copies occupy residues 81–107, 108–134, 135–161, 162–188, and 189–206. Positions 81-189 are 5 X 27 AA tandem repeats; the sequence is TTPKPTTPKQ…TSDTHTIKRT (109 aa). 4 stretches are compositionally biased toward basic and acidic residues: residues 95–104, 122–131, 149–158, and 176–185; these read TSDKTSDTHT.

The protein is Antigen 10-3 of Schistosoma mansoni (Blood fluke).